A 263-amino-acid polypeptide reads, in one-letter code: tRNA pseudouridine synthase A (263 aa).

The Nucleophile role is filled by Asp51. Tyr109 is a substrate binding site.

It belongs to the tRNA pseudouridine synthase TruA family. As to quaternary structure, homodimer.

The catalysed reaction is uridine(38/39/40) in tRNA = pseudouridine(38/39/40) in tRNA. Its function is as follows. Formation of pseudouridine at positions 38, 39 and 40 in the anticodon stem and loop of transfer RNAs. The sequence is that of tRNA pseudouridine synthase A from Mannheimia succiniciproducens (strain KCTC 0769BP / MBEL55E).